An 833-amino-acid chain; its full sequence is Leucine--tRNA ligase (833 aa).

A 'HIGH' region motif is present at residues 41–52; that stretch reads PYPSGAGLHVGH. Positions 610–614 match the 'KMSKS' region motif; the sequence is KMSKS. Lysine 613 contacts ATP.

It belongs to the class-I aminoacyl-tRNA synthetase family.

The protein localises to the cytoplasm. The enzyme catalyses tRNA(Leu) + L-leucine + ATP = L-leucyl-tRNA(Leu) + AMP + diphosphate. The protein is Leucine--tRNA ligase of Streptococcus sanguinis (strain SK36).